The following is a 434-amino-acid chain: Arrestin domain-containing protein 1 (434 aa).

The segment at 292-349 (SPCPGRESSPGTLSLVVPSAPPQEEAEAVASGPHFSDPVSLSTKSHSQQQPLSAPLGS) is disordered. The span at 330–343 (VSLSTKSHSQQQPL) shows a compositional bias: polar residues. Short sequence motifs (PPxY motif) lie at residues 401–404 (PPEY) and 414–417 (PPSY).

This sequence belongs to the arrestin family. As to quaternary structure, interacts (via PPxY motifs) with ITCH (via WW domains); the interaction is direct and participates in the recruitment of the ubiquitin-protein ligase ITCH to the NOTCH1 receptor. Interacts with ARRB1 and ARRB2; the interaction is direct. Interacts with TSG101; may recruit TSG101 to the plasma membrane. Interacts (via PPxY motifs) with WWP2 (via WW domains); ubiquitinates ARRDC1. Interacts with SLC11A2; controls the incorporation of SLC11A2 into extracellular vesicles through an ubiquitination-dependent mechanism. Interacts with WWP1 (via WW domains). Interacts with NEDD4 (via WW domains). Interacts with PDCD6IP. Ubiquitinated. Ubiquitination by WWP2; promotes localization to extracellular microvesicles. Ubiquitinated by WWP1.

The protein localises to the cell membrane. Its function is as follows. Functions as an adapter recruiting ubiquitin-protein ligases to their specific substrates. Through an ubiquitination-dependent mechanism plays for instance a role in the incorporation of SLC11A2 into extracellular vesicles. More generally, plays a role in the extracellular transport of proteins between cells through the release in the extracellular space of microvesicles. By participating to the ITCH-mediated ubiquitination and subsequent degradation of NOTCH1, negatively regulates the NOTCH signaling pathway. The protein is Arrestin domain-containing protein 1 of Mus musculus (Mouse).